The sequence spans 475 residues: D-lactate dehydrogenase (475 aa).

The 180-residue stretch at Y43 to A222 folds into the FAD-binding PCMH-type domain.

This sequence belongs to the FAD-binding oxidoreductase/transferase type 4 family. FAD is required as a cofactor. Requires Zn(2+) as cofactor.

It catalyses the reaction (R)-lactate + A = pyruvate + AH2. Its function is as follows. Catalyzes the dehydrogenation of (R)-lactate (D-lactate) to pyruvate. Active in vitro with the artificial electron acceptor 2,6-dichlorophenolindophenol (DCPIP), but not with NAD, NADP, or cytochrome c. Also displays a very low oxidase activity in vitro on D-lactate and L-lactate with O2 as the electron acceptor, but this activity is most likely not physiological. The polypeptide is D-lactate dehydrogenase (Anaerostipes hadrus).